Here is a 101-residue protein sequence, read N- to C-terminus: uncharacterized protein (101 aa).

A helical membrane pass occupies residues 72-94 (ILCPSFLNYSFINIYCFGPYTMV).

It localises to the membrane. This is an uncharacterized protein from Schizosaccharomyces pombe (strain 972 / ATCC 24843) (Fission yeast).